Consider the following 361-residue polypeptide: Phosphoserine aminotransferase (361 aa).

Arg-43 contacts L-glutamate. Residues 77 to 78 (AS), Trp-103, Thr-153, Asp-173, and Gln-196 each bind pyridoxal 5'-phosphate. N6-(pyridoxal phosphate)lysine is present on Lys-197. 238-239 (NT) provides a ligand contact to pyridoxal 5'-phosphate.

Belongs to the class-V pyridoxal-phosphate-dependent aminotransferase family. SerC subfamily. Homodimer. The cofactor is pyridoxal 5'-phosphate.

It is found in the cytoplasm. The catalysed reaction is O-phospho-L-serine + 2-oxoglutarate = 3-phosphooxypyruvate + L-glutamate. It carries out the reaction 4-(phosphooxy)-L-threonine + 2-oxoglutarate = (R)-3-hydroxy-2-oxo-4-phosphooxybutanoate + L-glutamate. It functions in the pathway amino-acid biosynthesis; L-serine biosynthesis; L-serine from 3-phospho-D-glycerate: step 2/3. The protein operates within cofactor biosynthesis; pyridoxine 5'-phosphate biosynthesis; pyridoxine 5'-phosphate from D-erythrose 4-phosphate: step 3/5. In terms of biological role, catalyzes the reversible conversion of 3-phosphohydroxypyruvate to phosphoserine and of 3-hydroxy-2-oxo-4-phosphonooxybutanoate to phosphohydroxythreonine. The polypeptide is Phosphoserine aminotransferase (Ectopseudomonas mendocina (strain ymp) (Pseudomonas mendocina)).